Consider the following 466-residue polypeptide: 3-isopropylmalate dehydratase large subunit (466 aa).

3 residues coordinate [4Fe-4S] cluster: C347, C407, and C410.

This sequence belongs to the aconitase/IPM isomerase family. LeuC type 1 subfamily. As to quaternary structure, heterodimer of LeuC and LeuD. It depends on [4Fe-4S] cluster as a cofactor.

The catalysed reaction is (2R,3S)-3-isopropylmalate = (2S)-2-isopropylmalate. Its pathway is amino-acid biosynthesis; L-leucine biosynthesis; L-leucine from 3-methyl-2-oxobutanoate: step 2/4. Functionally, catalyzes the isomerization between 2-isopropylmalate and 3-isopropylmalate, via the formation of 2-isopropylmaleate. This is 3-isopropylmalate dehydratase large subunit from Blochmanniella floridana.